A 116-amino-acid chain; its full sequence is Tyrosine-protein phosphatase 14 (116 aa).

In terms of domain architecture, Tyrosine-protein phosphatase spans W1 to V116. D84 is a substrate binding site.

The protein belongs to the protein-tyrosine phosphatase family.

It carries out the reaction O-phospho-L-tyrosyl-[protein] + H2O = L-tyrosyl-[protein] + phosphate. This Styela plicata (Wrinkled sea squirt) protein is Tyrosine-protein phosphatase 14 (STY-14).